The sequence spans 683 residues: Cyclic nucleotide-gated channel alpha-1 (683 aa).

The Cytoplasmic portion of the chain corresponds to 1–160 (MKTNIINTWH…PSGNMYYNWL (160 aa)). The interval 34–144 (ACSSFSDNDN…PKEKKEEEKK (111 aa)) is disordered. Basic and acidic residues predominate over residues 105 to 144 (SKADDKKESKKDPEKKKKKEKEKEKKKEEKPKEKKEEEKK). Residues 161 to 182 (FCITLPVMYNWTMIIARACFDE) traverse the membrane as a helical segment. Residues 183-192 (LQSDYLEYWL) are Extracellular-facing. Residues 193-213 (IFDYVSDVVYLADMFVRTRTG) form a helical membrane-spanning segment. Residues 214-238 (YLEQGLLVKDELKLIEKYKANLQFK) lie on the Cytoplasmic side of the membrane. The chain crosses the membrane as a helical span at residues 239–257 (LDVLSVIPTDLLYFKFGWN). Over 258–262 (YPEIR) the chain is Extracellular. A helical transmembrane segment spans residues 263 to 281 (LNRLLRISRMFEFFQRTET). At 282–288 (RTNYPNI) the chain is on the cytoplasmic side. Positions 286 to 394 (PNIFRISNLV…GNIGSMISNM (109 aa)) are ion conduction pathway. A helical transmembrane segment spans residues 289-312 (FRISNLVMYIVIIIHWNACVYYSI). The Extracellular segment spans residues 313 to 335 (SKAIGFGNDTWVYPDVNDPEFGR). Asparagine 320 carries N-linked (GlcNAc...) asparagine glycosylation. 2 helical membrane passes run 336 to 370 (LARKYVYSLYWSTLTLTTIGETPPPVLDSEYVFVV) and 371 to 395 (VDFLIGVLIFATIVGNIGSMISNMN). A selectivity filter region spans residues 353 to 356 (TIGE). Positions 396–472 (AARAEFQSRV…DTLKKVRIFA (77 aa)) are C-linker. Residues 396 to 683 (AARAEFQSRV…ESEPTESLQG (288 aa)) lie on the Cytoplasmic side of the membrane. A cyclic nucleotide-binding domain region spans residues 476–596 (AGLLVELVLK…EEKGRQILMK (121 aa)). 3',5'-cyclic GMP is bound by residues glycine 536, serine 539, arginine 552, and threonine 553. Residues arginine 552 and threonine 553 each coordinate 3',5'-cyclic AMP. A coiled-coil region spans residues 614-668 (LEEKVTRMEGSVDLLQTRFARILAEYESMQQKLKQRLTKVEKFLKPLIETEFSAL).

This sequence belongs to the cyclic nucleotide-gated cation channel (TC 1.A.1.5) family. CNGA1 subfamily. Forms heterotetrameric channels composed of CNGA1 and CNGB1 subunits with 3:1 stoichiometry. May also form cyclic nucleotide-activated homotetrameric channels, that are efficiently activated by saturating cGMP, but poorly activated by saturating cAMP compared to the heterotetramer with CNGB1. The channel binds Ca(2+)-bound CALM1 via CaM1 and CaM2 regions of the CNGB1 subunit; this interaction modulates the affinity of the channel for cNMPs in response to intracellular Ca(2+) levels. Rod cells in the retina.

The protein resides in the cell membrane. The catalysed reaction is Ca(2+)(in) = Ca(2+)(out). The enzyme catalyses Na(+)(in) = Na(+)(out). It carries out the reaction K(+)(in) = K(+)(out). It catalyses the reaction NH4(+)(in) = NH4(+)(out). The catalysed reaction is Rb(+)(in) = Rb(+)(out). The enzyme catalyses Li(+)(in) = Li(+)(out). It carries out the reaction Cs(+)(in) = Cs(+)(out). Its function is as follows. Pore-forming subunit of the rod cyclic nucleotide-gated channel. Mediates rod photoresponses at dim light converting transient changes in intracellular cGMP levels into electrical signals. In the dark, cGMP levels are high and keep the channel open enabling a steady inward current carried by Na(+) and Ca(2+) ions that leads to membrane depolarization and neurotransmitter release from synaptic terminals. Upon photon absorption cGMP levels decline leading to channel closure and membrane hyperpolarization that ultimately slows neurotransmitter release and signals the presence of light, the end point of the phototransduction cascade. Conducts cGMP- and cAMP-gated ion currents, with permeability for monovalent and divalent cations. The selectivity for Ca(2+) over Na(+) increases with cGMP concentrations, whereas the selectivity among monovalent ions is independent of the cGMP levels. The polypeptide is Cyclic nucleotide-gated channel alpha-1 (Rattus norvegicus (Rat)).